The chain runs to 184 residues: Large ribosomal subunit protein uL6 (184 aa).

The protein belongs to the universal ribosomal protein uL6 family. As to quaternary structure, part of the 50S ribosomal subunit.

Functionally, this protein binds to the 23S rRNA, and is important in its secondary structure. It is located near the subunit interface in the base of the L7/L12 stalk, and near the tRNA binding site of the peptidyltransferase center. In Thermotoga neapolitana (strain ATCC 49049 / DSM 4359 / NBRC 107923 / NS-E), this protein is Large ribosomal subunit protein uL6.